Here is a 331-residue protein sequence, read N- to C-terminus: MKQTVYTASPESQQIHVWSLNHEGTLTLVQVVDVPGQVQTMVVSPDKRYLYVGVRPEFRVLAYRIAPDDGALTFAAESALPGSPTHISTDHHGRFVFVGSYNAGNVSVTRLQDGLPVELVGVVEGLDGCHSANITPDNRTLWVPALKQDRICLFTLSDDGHLVAQEPAEVNTVEGAGPRHMVFHPNRQYAYCVNELNSSVDVWQLKNPHGEIECVQTLDMMPADFSDTRWAADIHITPDGRHLYACDRTASLITVFSVSEDGSVLSVEGFQPTEAQPRGFNIDNSGKYLIAAGQKSHHIAVYEITGTQGLLTEKGRYAVGQGPMWVVVNAY.

It belongs to the cycloisomerase 2 family.

It catalyses the reaction 6-phospho-D-glucono-1,5-lactone + H2O = 6-phospho-D-gluconate + H(+). It participates in carbohydrate degradation; pentose phosphate pathway; D-ribulose 5-phosphate from D-glucose 6-phosphate (oxidative stage): step 2/3. In terms of biological role, catalyzes the hydrolysis of 6-phosphogluconolactone to 6-phosphogluconate. The sequence is that of 6-phosphogluconolactonase from Salmonella gallinarum (strain 287/91 / NCTC 13346).